Here is a 339-residue protein sequence, read N- to C-terminus: MLPDLSAAPMQDRYGRPLRDLRLSVIEACNFRCGYCMPADRVPDDYGLDADQRLSFDQLETLVRAFVAVGVTKLRLTGGEPLLRKNLPVLIQRLAAIEGIEDLALTTNGALLARQAVALRQAGLRRITVSMDALEPALFRQMSGGRGEIDQVLAGIAAAEQAGFDRLKINCVVQRDVNEDQVLPLVEHFRGTGHVLRFIEFMDVGSCNGWRPEAVVTSAQLRDRIHARWPLAPLDANYTGEVAQRHAFADGLGEVGFVSSVSVPFCGDCQRARVSADGHLYTCLFASQGHDLKPALAEGEQGLATHLRQRWSVRADRYSEVRASTSRRRKPVEMFLIGG.

Positions 13-249 (RYGRPLRDLR…GEVAQRHAFA (237 aa)) constitute a Radical SAM core domain. Residue R22 coordinates GTP. Residues C29 and C33 each contribute to the [4Fe-4S] cluster site. Y35 lines the S-adenosyl-L-methionine pocket. C36 lines the [4Fe-4S] cluster pocket. R75 lines the GTP pocket. Residue G79 coordinates S-adenosyl-L-methionine. T106 contacts GTP. An S-adenosyl-L-methionine-binding site is contributed by S130. K168 contacts GTP. Residue M202 coordinates S-adenosyl-L-methionine. Positions 266 and 269 each coordinate [4Fe-4S] cluster. Position 271 to 273 (271 to 273 (RAR)) interacts with GTP. [4Fe-4S] cluster is bound at residue C283.

It belongs to the radical SAM superfamily. MoaA family. As to quaternary structure, monomer and homodimer. It depends on [4Fe-4S] cluster as a cofactor.

It carries out the reaction GTP + AH2 + S-adenosyl-L-methionine = (8S)-3',8-cyclo-7,8-dihydroguanosine 5'-triphosphate + 5'-deoxyadenosine + L-methionine + A + H(+). Its pathway is cofactor biosynthesis; molybdopterin biosynthesis. Catalyzes the cyclization of GTP to (8S)-3',8-cyclo-7,8-dihydroguanosine 5'-triphosphate. This Xanthomonas campestris pv. campestris (strain B100) protein is GTP 3',8-cyclase.